Consider the following 254-residue polypeptide: Nickel import ATP-binding protein NikO (254 aa).

Positions 5 to 246 (FELQGVQFAY…TALLRRARLL (242 aa)) constitute an ABC transporter domain. 37–44 (GANGSGKS) contributes to the ATP binding site.

It belongs to the ABC transporter superfamily. As to quaternary structure, forms an energy-coupling factor (ECF) transporter complex composed of an ATP-binding protein (A component, NikO), a transmembrane protein (T component, NikQ) and a fused possible substrate-capture protein (S component, NikMN) of unknown stoichimetry.

It localises to the cell inner membrane. It carries out the reaction Ni(2+)(out) + ATP + H2O = Ni(2+)(in) + ADP + phosphate + H(+). In terms of biological role, part of the energy-coupling factor (ECF) transporter complex NikMNQO involved in nickel import. The complex confers nickel uptake upon expression in E.coli. Shows very low activity with cobalt. Presumably responsible for energy coupling to the transport system. The sequence is that of Nickel import ATP-binding protein NikO from Rhodobacter capsulatus (strain ATCC BAA-309 / NBRC 16581 / SB1003).